The primary structure comprises 764 residues: Zygote defective protein 12 (764 aa).

Residues 1–20 (MLDLTNQESDSSENGNSKYA) are compositionally biased toward polar residues. The tract at residues 1–33 (MLDLTNQESDSSENGNSKYADSTDGRGIGTSRR) is disordered. The segment at 1 to 236 (MLDLTNQESD…ESSVITNGNG (236 aa)) is interaction with dli-1. The Calponin-homology (CH) domain occupies 43–169 (RKDLADLVFW…VSLAFIGKTQ (127 aa)). 2 coiled-coil regions span residues 244 to 405 (LSAN…HVKT) and 436 to 692 (GLES…NRLI). The helical transmembrane segment at 732–752 (ALPWRFGISSMLIIFMVWFFI) threads the bilayer.

This sequence belongs to the hook family. As to quaternary structure, homodimer. Interacts with the dynein subunit dli-1 via its N-terminus. May interact with microtubules.

It localises to the nucleus membrane. The protein resides in the cytoplasm. The protein localises to the cytoskeleton. It is found in the microtubule organizing center. Its subcellular location is the centrosome. In terms of biological role, cytoskeletal linker protein, which is essential for attachment of the centrosome to the nucleus. Required for dynein localization to the nuclear envelope. In Caenorhabditis briggsae, this protein is Zygote defective protein 12 (zyg-12).